The sequence spans 344 residues: MTAPTTTSPSSEATTTTTTTTLNTIATLHQSLTTETTPLPVRFRALFSLKHVAATHPATSAESLAAIDAIAAGFASPSALLKHELAYCLGQTANGAAIPYLTAVLEDTGEDAMCRHEAAEALGALGDVASLGVLKRFRDREGEEVVVTETCELAVERIEWENGEGKKAEKLRASDFSSVDPAPPTAQGQEEQTVEELGNALMDTSLPLFKRYRAMFALRDLASPPDLPTAVPAVLALAKGFADSSALFRHEIAFVFGQLAHPASIPALTEALSNTEEASMVRHEAAEALGSLGDEEGVEETLRKFLHDAEAVVRESVIVALDMAEYEKSNETEYALIPEAQGTA.

2 HEAT-like PBS-type repeats span residues 81-107 and 115-140; these read LKHE…VLED and RHEA…FRDR. Fe cation-binding residues include His83, Glu84, His116, and Glu117. Positions 169 to 188 are disordered; it reads EKLRASDFSSVDPAPPTAQG. HEAT-like PBS-type repeat units lie at residues 210-240, 248-274, and 281-308; these read KRYR…LAKG, FRHE…ALSN, and VRHE…FLHD. His250, Glu251, His283, and Glu284 together coordinate Fe cation.

It belongs to the deoxyhypusine hydroxylase family. Fe(2+) serves as cofactor.

The protein resides in the cytoplasm. Its subcellular location is the nucleus. The catalysed reaction is [eIF5A protein]-deoxyhypusine + AH2 + O2 = [eIF5A protein]-hypusine + A + H2O. It functions in the pathway protein modification; eIF5A hypusination. Its function is as follows. Catalyzes the hydroxylation of the N(6)-(4-aminobutyl)-L-lysine intermediate to form hypusine, an essential post-translational modification only found in mature eIF-5A factor. The sequence is that of Deoxyhypusine hydroxylase from Chaetomium globosum (strain ATCC 6205 / CBS 148.51 / DSM 1962 / NBRC 6347 / NRRL 1970) (Soil fungus).